The primary structure comprises 131 residues: Large-conductance mechanosensitive channel (131 aa).

Helical transmembrane passes span 8-28, 30-50, and 67-87; these read FAMR…GAFG, IVSS…LGGV, and GMFI…FVFV.

This sequence belongs to the MscL family. Homopentamer.

It localises to the cell membrane. In terms of biological role, channel that opens in response to stretch forces in the membrane lipid bilayer. May participate in the regulation of osmotic pressure changes within the cell. The protein is Large-conductance mechanosensitive channel of Geobacillus sp. (strain WCH70).